A 226-amino-acid chain; its full sequence is Ribonuclease 3 (226 aa).

In terms of domain architecture, RNase III spans 7-129; the sequence is LARLSRTLGY…IIGAVYLDAN (123 aa). Residue E42 coordinates Mg(2+). The active site involves D46. Positions 115 and 118 each coordinate Mg(2+). The active site involves E118. Residues 156–226 form the DRBM domain; it reads DPKTILQEYL…AAQILELINK (71 aa).

The protein belongs to the ribonuclease III family. As to quaternary structure, homodimer. It depends on Mg(2+) as a cofactor.

Its subcellular location is the cytoplasm. The catalysed reaction is Endonucleolytic cleavage to 5'-phosphomonoester.. Its function is as follows. Digests double-stranded RNA. Involved in the processing of primary rRNA transcript to yield the immediate precursors to the large and small rRNAs (23S and 16S). Processes some mRNAs, and tRNAs when they are encoded in the rRNA operon. Processes pre-crRNA and tracrRNA of type II CRISPR loci if present in the organism. In Shewanella denitrificans (strain OS217 / ATCC BAA-1090 / DSM 15013), this protein is Ribonuclease 3.